The primary structure comprises 432 residues: MLALLTAGVALAVAAGQAQDNPIPGSRFVCTALPPEAARAGCPLPAMPMQGGALSPEEELRAAVLHWRETVVQQKETLGAQREAIRELTSKLARCEGLAGGKARGTGATGKDTMGDLPRDPGHVVEQLSRSLQTLKDRLESLELQLHTNASNAGLPSDFREVLQRRLGELERQLLRKVAELEDEKSLLHNETSAHRQKTENTLNALLQRVTELERGNSAFKSPDAFKVSLPLRTNYLYGKIKKTLPELYAFTICLWLRSSASPGIGTPFSYAVPGQANEIVLIEWGNNPIELLINDKVAQLPLFVSDGKWHHICITWTTRDGMWEAFQDGEKLGTGENLAPWHPIKPGGVLILGQEQDTVGGRFDATQAFVGELSQFNIWDRVLRAQEIINIANCSTNMPGNIIPWVDNNVDVFGGASKWPVETCEERLLDL.

An N-terminal signal peptide occupies residues 1–14 (MLALLTAGVALAVA). N-linked (GlcNAc...) asparagine glycosylation is found at Asn-149 and Asn-190. The Pentraxin (PTX) domain maps to 224 to 425 (DAFKVSLPLR…GASKWPVETC (202 aa)). Cys-254 and Cys-314 form a disulfide bridge. Positions 278, 356, 357, 358, and 368 each coordinate Ca(2+). N-linked (GlcNAc...) asparagine glycosylation occurs at Asn-394.

Homooligomer or heterooligomer (probably pentamer) with neuronal pentraxin receptor (NPTXR). It depends on Ca(2+) as a cofactor.

It is found in the secreted. Functionally, likely to play role in the modification of cellular properties that underlie long-term plasticity. Binds to agar matrix in a calcium-dependent manner. This chain is Neuronal pentraxin-2 (Nptx2), found in Rattus norvegicus (Rat).